The primary structure comprises 218 residues: 3,4-dihydroxy-2-butanone 4-phosphate synthase (218 aa).

D-ribulose 5-phosphate is bound by residues 37 to 38 (RE), Asp-42, 150 to 154 (RGGHT), and Glu-174. Glu-38 provides a ligand contact to Mg(2+). Residue His-153 participates in Mg(2+) binding.

The protein belongs to the DHBP synthase family. Homodimer. Mg(2+) serves as cofactor. The cofactor is Mn(2+).

The catalysed reaction is D-ribulose 5-phosphate = (2S)-2-hydroxy-3-oxobutyl phosphate + formate + H(+). It participates in cofactor biosynthesis; riboflavin biosynthesis; 2-hydroxy-3-oxobutyl phosphate from D-ribulose 5-phosphate: step 1/1. Its function is as follows. Catalyzes the conversion of D-ribulose 5-phosphate to formate and 3,4-dihydroxy-2-butanone 4-phosphate. In Erwinia tasmaniensis (strain DSM 17950 / CFBP 7177 / CIP 109463 / NCPPB 4357 / Et1/99), this protein is 3,4-dihydroxy-2-butanone 4-phosphate synthase.